A 212-amino-acid chain; its full sequence is ATP-dependent dethiobiotin synthetase BioD (212 aa).

Residue 13–18 coordinates ATP; it reads GIGKTV. Threonine 17 provides a ligand contact to Mg(2+). The active site involves lysine 33. A substrate-binding site is contributed by serine 37. Glutamate 100 lines the Mg(2+) pocket. ATP is bound by residues 100-103 and 184-186; these read EGAG and PLL.

This sequence belongs to the dethiobiotin synthetase family. As to quaternary structure, homodimer. It depends on Mg(2+) as a cofactor.

Its subcellular location is the cytoplasm. The enzyme catalyses (7R,8S)-7,8-diammoniononanoate + CO2 + ATP = (4R,5S)-dethiobiotin + ADP + phosphate + 3 H(+). Its pathway is cofactor biosynthesis; biotin biosynthesis; biotin from 7,8-diaminononanoate: step 1/2. Its function is as follows. Catalyzes a mechanistically unusual reaction, the ATP-dependent insertion of CO2 between the N7 and N8 nitrogen atoms of 7,8-diaminopelargonic acid (DAPA, also called 7,8-diammoniononanoate) to form a ureido ring. The polypeptide is ATP-dependent dethiobiotin synthetase BioD (Brucella melitensis biotype 2 (strain ATCC 23457)).